The following is a 454-amino-acid chain: Guanine deaminase (454 aa).

Residues histidine 82 and histidine 84 each contribute to the Zn(2+) site. Substrate contacts are provided by residues 84–87, 213–214, 240–243, and aspartate 330; these read HAPQ, RF, and HISE. Residues histidine 240 and aspartate 330 each coordinate Zn(2+). Serine 453 is subject to Phosphoserine.

Belongs to the metallo-dependent hydrolases superfamily. ATZ/TRZ family. As to quaternary structure, homodimer. Requires Zn(2+) as cofactor.

It catalyses the reaction guanine + H2O + H(+) = xanthine + NH4(+). It functions in the pathway purine metabolism; guanine degradation; xanthine from guanine: step 1/1. Catalyzes the hydrolytic deamination of guanine, producing xanthine and ammonia. The protein is Guanine deaminase of Mus musculus (Mouse).